The following is a 416-amino-acid chain: MQGHQPAAYTLRKHETEVTCLKVVSWEPYPVLASGDAKGELYLWNLVTRRPFAGYKLETKAQIIYIKWLNNYLIVLSKDHTLRFLQLHNETAVAIRGWAGNQFELQSFKIVYEVPVNTLNFANVVVTHMRESQYRLWCCNTMDSESIDVYEFDVKEQRSLRRLVSGINLYKAIIKAGNWSTGESLDKTGIVMCFLEHNGVVYLGYECGFVLGLQLVERSGENPTIVVSYVSSVHYPEPVLSLCYNEREEVILSSSTNDAIGVHALQAHSVNVSESEIAFFSIEEGIAIKRDLTLINKSIHLPTSKIGHLGCVDGRLIAVDWSGRTLVCEKDETKFCFSKQRSNVLVDESSAGTFDQGKAPRCHIKATSMACIGKQTLRELRGIRRGEKRRTELCANRSWCFTGYEDGSVIMQSFET.

WD repeat units lie at residues 13–54, 58–95, 111–147, and 234–273; these read KHET…PFAG, ETKA…AVAI, VYEV…SESI, and HYPE…VNVS.

This sequence belongs to the WD repeat ASA1 family. As to quaternary structure, component of the ASTRA chromatin remodeling machinery complex.

The protein localises to the nucleus. Functionally, component of the ASTRA complex involved in chromatin remodeling. The sequence is that of ASTRA-associated protein 1 (ASA1) from Lachancea thermotolerans (strain ATCC 56472 / CBS 6340 / NRRL Y-8284) (Yeast).